A 277-amino-acid chain; its full sequence is Putative phosphoenolpyruvate synthase regulatory protein (277 aa).

157–164 serves as a coordination point for ADP; sequence GVSRCGKT.

Belongs to the pyruvate, phosphate/water dikinase regulatory protein family. PSRP subfamily.

It carries out the reaction [pyruvate, water dikinase] + ADP = [pyruvate, water dikinase]-phosphate + AMP + H(+). The catalysed reaction is [pyruvate, water dikinase]-phosphate + phosphate + H(+) = [pyruvate, water dikinase] + diphosphate. Bifunctional serine/threonine kinase and phosphorylase involved in the regulation of the phosphoenolpyruvate synthase (PEPS) by catalyzing its phosphorylation/dephosphorylation. This chain is Putative phosphoenolpyruvate synthase regulatory protein, found in Citrobacter koseri (strain ATCC BAA-895 / CDC 4225-83 / SGSC4696).